The sequence spans 359 residues: Peptide chain release factor 1 (359 aa).

Gln235 is subject to N5-methylglutamine. Positions 287-312 (AQEASAMRSAQVGSGDRSERIRTYNF) are disordered.

The protein belongs to the prokaryotic/mitochondrial release factor family. In terms of processing, methylated by PrmC. Methylation increases the termination efficiency of RF1.

The protein resides in the cytoplasm. Peptide chain release factor 1 directs the termination of translation in response to the peptide chain termination codons UAG and UAA. The sequence is that of Peptide chain release factor 1 from Chlamydia trachomatis serovar L2 (strain ATCC VR-902B / DSM 19102 / 434/Bu).